We begin with the raw amino-acid sequence, 146 residues long: Hut operon positive regulatory protein (146 aa).

Belongs to the HutP family. As to quaternary structure, homohexamer.

Antiterminator that binds to cis-acting regulatory sequences on the mRNA in the presence of histidine, thereby suppressing transcription termination and activating the hut operon for histidine utilization. In Bacillus mycoides (strain KBAB4) (Bacillus weihenstephanensis), this protein is Hut operon positive regulatory protein.